Consider the following 234-residue polypeptide: Ribose-5-phosphate isomerase A (234 aa).

Residues 28-31, 83-86, and 96-99 contribute to the substrate site; these read TGST, DGAD, and KGGG. Residue Glu105 is the Proton acceptor of the active site. Substrate is bound at residue Lys123.

This sequence belongs to the ribose 5-phosphate isomerase family. Homodimer.

The catalysed reaction is aldehydo-D-ribose 5-phosphate = D-ribulose 5-phosphate. The protein operates within carbohydrate degradation; pentose phosphate pathway; D-ribose 5-phosphate from D-ribulose 5-phosphate (non-oxidative stage): step 1/1. Catalyzes the reversible conversion of ribose-5-phosphate to ribulose 5-phosphate. This is Ribose-5-phosphate isomerase A from Bartonella quintana (strain Toulouse) (Rochalimaea quintana).